Consider the following 379-residue polypeptide: Bifunctional enzyme IspD/IspF (379 aa).

The segment at 1 to 223 is 2-C-methyl-D-erythritol 4-phosphate cytidylyltransferase; sequence MTVAVIIVAA…RERKGLTMDV (223 aa). The segment at 224–379 is 2-C-methyl-D-erythritol 2,4-cyclodiphosphate synthase; the sequence is RLGNGYDVHA…SIATVTLIGA (156 aa). 2 residues coordinate a divalent metal cation: Asp230 and His232. 4-CDP-2-C-methyl-D-erythritol 2-phosphate is bound by residues 230 to 232 and 256 to 257; these read DVH and HS. His264 provides a ligand contact to a divalent metal cation. 4-CDP-2-C-methyl-D-erythritol 2-phosphate-binding positions include 278–280, 354–357, Phe361, and Arg364; these read DIG and TTSE.

The protein in the N-terminal section; belongs to the IspD/TarI cytidylyltransferase family. IspD subfamily. It in the C-terminal section; belongs to the IspF family. It depends on a divalent metal cation as a cofactor.

It catalyses the reaction 2-C-methyl-D-erythritol 4-phosphate + CTP + H(+) = 4-CDP-2-C-methyl-D-erythritol + diphosphate. It carries out the reaction 4-CDP-2-C-methyl-D-erythritol 2-phosphate = 2-C-methyl-D-erythritol 2,4-cyclic diphosphate + CMP. It functions in the pathway isoprenoid biosynthesis; isopentenyl diphosphate biosynthesis via DXP pathway; isopentenyl diphosphate from 1-deoxy-D-xylulose 5-phosphate: step 2/6. The protein operates within isoprenoid biosynthesis; isopentenyl diphosphate biosynthesis via DXP pathway; isopentenyl diphosphate from 1-deoxy-D-xylulose 5-phosphate: step 4/6. Its function is as follows. Bifunctional enzyme that catalyzes the formation of 4-diphosphocytidyl-2-C-methyl-D-erythritol from CTP and 2-C-methyl-D-erythritol 4-phosphate (MEP) (IspD), and catalyzes the conversion of 4-diphosphocytidyl-2-C-methyl-D-erythritol 2-phosphate (CDP-ME2P) to 2-C-methyl-D-erythritol 2,4-cyclodiphosphate (ME-CPP) with a corresponding release of cytidine 5-monophosphate (CMP) (IspF). This Rhodobacter capsulatus (strain ATCC BAA-309 / NBRC 16581 / SB1003) protein is Bifunctional enzyme IspD/IspF.